The following is a 278-amino-acid chain: Ribosomal RNA small subunit methyltransferase A (278 aa).

Positions 27, 29, 54, 75, 95, and 118 each coordinate S-adenosyl-L-methionine.

The protein belongs to the class I-like SAM-binding methyltransferase superfamily. rRNA adenine N(6)-methyltransferase family. RsmA subfamily.

The protein resides in the cytoplasm. It catalyses the reaction adenosine(1518)/adenosine(1519) in 16S rRNA + 4 S-adenosyl-L-methionine = N(6)-dimethyladenosine(1518)/N(6)-dimethyladenosine(1519) in 16S rRNA + 4 S-adenosyl-L-homocysteine + 4 H(+). Specifically dimethylates two adjacent adenosines (A1518 and A1519) in the loop of a conserved hairpin near the 3'-end of 16S rRNA in the 30S particle. May play a critical role in biogenesis of 30S subunits. The sequence is that of Ribosomal RNA small subunit methyltransferase A from Chlamydia caviae (strain ATCC VR-813 / DSM 19441 / 03DC25 / GPIC) (Chlamydophila caviae).